Here is a 457-residue protein sequence, read N- to C-terminus: Multidrug resistance protein MdtK (457 aa).

Helical transmembrane passes span 11 to 31 (LLAL…MGFV), 53 to 73 (IWLP…PVIA), 93 to 113 (WLAG…GYII), 127 to 147 (AVGY…FQVA), 160 to 180 (GMVM…IFIY), 189 to 209 (GGVG…LAMV), 243 to 263 (LPIA…ALLV), 276 to 296 (IALN…AAVT), 314 to 334 (AART…IFTV), 350 to 370 (VVTL…SDSI), 387 to 407 (IFYI…YILA), and 418 to 438 (PAGF…MMML).

This sequence belongs to the multi antimicrobial extrusion (MATE) (TC 2.A.66.1) family. MdtK subfamily.

It localises to the cell inner membrane. Functionally, multidrug efflux pump that functions probably as a Na(+)/drug antiporter. The sequence is that of Multidrug resistance protein MdtK from Escherichia coli O9:H4 (strain HS).